The chain runs to 655 residues: Epithelial sodium channel subunit gamma (655 aa).

Residues 1–55 (MAPGEKIKAKIKKNLPVRGPQAPTIKDLMHWYCLNTNTHGCRRIVVSRGRLRRLL) lie on the Cytoplasmic side of the membrane. The chain crosses the membrane as a helical span at residues 56–76 (WIAFTLTAVALIIWQCALLVF). The Extracellular segment spans residues 77-547 (SFYTVSVSIK…GGQLGLWMSC (471 aa)). Cystine bridges form between Cys100–Cys289, Cys213–Cys220, Cys266–Cys273, Cys378–Cys463, Cys400–Cys459, Cys404–Cys455, Cys413–Cys440, and Cys415–Cys429. The tract at residues 140–227 (RKRREAGSMR…SDCATYTFSS (88 aa)) is gating release of inhibition by proteolysis (GRIP); protease-sensitive region that is responsible for the proteolytic activation of the channel. An N-linked (GlcNAc...) asparagine glycan is attached at Asn215. Asn277 carries N-linked (GlcNAc...) asparagine glycosylation. Asn503 carries N-linked (GlcNAc...) asparagine glycosylation. Residues 548 to 568 (SVVCVIEIIEVFFIDFFSIIA) form a helical membrane-spanning segment. The Cytoplasmic segment spans residues 569–655 (RRQWQKAKDW…LTDTQLTNEF (87 aa)). The tract at residues 582 to 636 (RRTPPSTETPSSQQGQDNPALDTDDDLPTFTSAMRLPPAPEAPVPGTPPPRYNTL) is disordered. A compositionally biased stretch (polar residues) spans 585–598 (PPSTETPSSQQGQD). The span at 618-632 (PPAPEAPVPGTPPPR) shows a compositional bias: pro residues. A PY motif; recruits WW domain-containing proteins and is thereby required for ubiquitination and inhibition of the channel by NEDD4 and NEDD4L motif is present at residues 629–633 (PPPRY).

The protein belongs to the amiloride-sensitive sodium channel (TC 1.A.6) family. SCNN1G subfamily. In terms of assembly, component of the heterotrimeric epithelial sodium channel (ENaC) composed of an alpha/SCNN1A, a beta/SCNN1B and a gamma/SCNN1G subunit. Interacts with WWP1 (via WW domains). Interacts with WWP2 (via WW domains); inhibits the channel. Interacts with the full-length immature form of PCSK9 (pro-PCSK9); inhibits ENaC by promoting its proteasomal degradation. Interacts with BPIFA1; the interaction is indirect via SCNN1B and inhibits the proteolytic maturation of SCNN1A and SCNN1G and the activation of ENaC. In terms of processing, phosphorylated on serine and threonine residues. Aldosterone and insulin increase the basal level of phosphorylation. Ubiquitinated. Can be ubiquitinated at multiple sites and undergo monoubiquitination and polyubiquitination. Ubiquitination by NEDD4 or NEDD4L inhibits the ENaC channel through endocytosis, intracellular retention and degradation of its individual subunits. Post-translationally, ENaC is activated through the proteolytic maturation of its subunits. Furin cleaves the SCNN1G subunit first, followed by cleavage by prostasin (PRSS8), which results in a stepwise increase in the open probability of the channel due to the release of an inhibitory tract. BPIFA1, which is recruited by the SCNN1B subunit, prevents the proteolytic activation of ENaC. In terms of processing, N-glycosylated. N-linked glycans are processed to complex type during ENaC complex assembly and transport to the plasma membrane. In terms of tissue distribution, lung and kidney.

Its subcellular location is the apical cell membrane. It carries out the reaction Na(+)(in) = Na(+)(out). Originally identified and characterized by its inhibition by the diuretic drug amiloride. Functionally, this is one of the three pore-forming subunits of the heterotrimeric epithelial sodium channel (ENaC), a critical regulator of sodium balance and fluid homeostasis. ENaC operates in epithelial tissues, where it mediates the electrodiffusion of sodium ions from extracellular fluid through the apical membrane of cells, with water following osmotically. It plays a key role in maintaining sodium homeostasis through electrogenic sodium reabsorption in the kidneys. Additionally, ENaC is essential for airway surface liquid homeostasis, which is crucial for proper mucus clearance. The chain is Epithelial sodium channel subunit gamma from Mus musculus (Mouse).